A 367-amino-acid chain; its full sequence is Sulfate/thiosulfate import ATP-binding protein CysA 2 (367 aa).

Residues 3–237 (VRVQNIRKEF…PVSPFVYGFI (235 aa)) form the ABC transporter domain. 35–42 (GPSGSGKT) contacts ATP.

This sequence belongs to the ABC transporter superfamily. Sulfate/tungstate importer (TC 3.A.1.6) family. In terms of assembly, the complex is composed of two ATP-binding proteins (CysA), two transmembrane proteins (CysT and CysW) and a solute-binding protein (CysP).

The protein localises to the cell inner membrane. It catalyses the reaction sulfate(out) + ATP + H2O = sulfate(in) + ADP + phosphate + H(+). The enzyme catalyses thiosulfate(out) + ATP + H2O = thiosulfate(in) + ADP + phosphate + H(+). Its function is as follows. Part of the ABC transporter complex CysAWTP involved in sulfate/thiosulfate import. Responsible for energy coupling to the transport system. This Rhizobium meliloti (strain 1021) (Ensifer meliloti) protein is Sulfate/thiosulfate import ATP-binding protein CysA 2.